A 188-amino-acid chain; its full sequence is Elongation factor P (188 aa).

This sequence belongs to the elongation factor P family.

It localises to the cytoplasm. Its pathway is protein biosynthesis; polypeptide chain elongation. Its function is as follows. Involved in peptide bond synthesis. Stimulates efficient translation and peptide-bond synthesis on native or reconstituted 70S ribosomes in vitro. Probably functions indirectly by altering the affinity of the ribosome for aminoacyl-tRNA, thus increasing their reactivity as acceptors for peptidyl transferase. The polypeptide is Elongation factor P (Natranaerobius thermophilus (strain ATCC BAA-1301 / DSM 18059 / JW/NM-WN-LF)).